We begin with the raw amino-acid sequence, 132 residues long: Small ribosomal subunit protein uS8 (132 aa).

This sequence belongs to the universal ribosomal protein uS8 family. In terms of assembly, part of the 30S ribosomal subunit. Contacts proteins S5 and S12.

One of the primary rRNA binding proteins, it binds directly to 16S rRNA central domain where it helps coordinate assembly of the platform of the 30S subunit. This chain is Small ribosomal subunit protein uS8, found in Latilactobacillus sakei subsp. sakei (strain 23K) (Lactobacillus sakei subsp. sakei).